Reading from the N-terminus, the 243-residue chain is Triosephosphate isomerase (243 aa).

9-11 (NWK) contacts substrate. The active-site Electrophile is His-96. Glu-165 functions as the Proton acceptor in the catalytic mechanism. Residues Gly-171, Ser-204, and 225–226 (GG) contribute to the substrate site.

The protein belongs to the triosephosphate isomerase family. Homodimer.

Its subcellular location is the cytoplasm. The enzyme catalyses D-glyceraldehyde 3-phosphate = dihydroxyacetone phosphate. Its pathway is carbohydrate biosynthesis; gluconeogenesis. The protein operates within carbohydrate degradation; glycolysis; D-glyceraldehyde 3-phosphate from glycerone phosphate: step 1/1. Functionally, involved in the gluconeogenesis. Catalyzes stereospecifically the conversion of dihydroxyacetone phosphate (DHAP) to D-glyceraldehyde-3-phosphate (G3P). This is Triosephosphate isomerase from Prochlorococcus marinus (strain MIT 9313).